The primary structure comprises 112 residues: Colipase (112 aa).

The N-terminal stretch at 1–17 (MEKILILLLVALSVAYA) is a signal peptide. Positions 18 to 22 (APGPR) are cleaved as a propeptide — enterostatin, activation peptide. Disulfide bonds link cysteine 34–cysteine 45, cysteine 40–cysteine 56, cysteine 44–cysteine 78, cysteine 66–cysteine 86, and cysteine 80–cysteine 104.

It belongs to the colipase family. Forms a 1:1 stoichiometric complex with pancreatic lipase. As to expression, expressed by the pancreas.

It is found in the secreted. In terms of biological role, colipase is a cofactor of pancreatic lipase. It allows the lipase to anchor itself to the lipid-water interface. Without colipase the enzyme is washed off by bile salts, which have an inhibitory effect on the lipase. Its function is as follows. Enterostatin has a biological activity as a satiety signal. In Homo sapiens (Human), this protein is Colipase.